Here is a 494-residue protein sequence, read N- to C-terminus: Vacuolar-processing enzyme (494 aa).

The N-terminal stretch at 1-20 (MTRLASGVLITLLVALAGIA) is a signal peptide. Residue asparagine 151 is glycosylated (N-linked (GlcNAc...) asparagine). Histidine 178 is a catalytic residue. Cysteine 220 serves as the catalytic Nucleophile. Cysteine 253 and cysteine 267 are oxidised to a cystine. Asparagine 336 is a glycosylation site (N-linked (GlcNAc...) asparagine). 2 disulfide bridges follow: cysteine 430–cysteine 460 and cysteine 442–cysteine 477.

This sequence belongs to the peptidase C13 family. As to expression, high levels are seen in the flowers, a lower level expression is seen in the leaves, while very low levels are seen in the stems and roots.

In terms of biological role, asparagine-specific endopeptidase that may be involved in processing of proteins targeted to vacuoles that accumulate during ethylene-regulated processes such as flower opening and flavedo degreening. This Citrus sinensis (Sweet orange) protein is Vacuolar-processing enzyme.